The sequence spans 1037 residues: Multidrug resistance protein MdtF (1037 aa).

Residues 1-9 lie on the Cytoplasmic side of the membrane; sequence MANYFIDRP. The chain crosses the membrane as a helical span at residues 10–30; the sequence is VFAWVLAIIMMLAGGLAIMNL. At 31–338 the chain is on the periplasmic side; that stretch reads PVAQYPQIAP…TTPFIKISIQ (308 aa). A helical transmembrane segment spans residues 339 to 359; the sequence is EVFKTLVEAIILVFLVMYLFL. At 360–369 the chain is on the cytoplasmic side; sequence QNFRATIIPT. A helical transmembrane segment spans residues 370–390; that stretch reads IAVPVVILGTFAILSAVGFTI. Residues 391-392 lie on the Periplasmic side of the membrane; that stretch reads NT. Residues 393-413 traverse the membrane as a helical segment; it reads LTMFGMVLAIGLLVDDAIVVV. Residues 414-440 are Cytoplasmic-facing; it reads ENVERVIAEDKLPPKEATHKSMGQIQR. A helical transmembrane segment spans residues 441 to 461; the sequence is ALVGIAVVLSAVFMPMAFMSG. The Periplasmic segment spans residues 462–471; it reads ATGEIYRQFS. Residues 472–492 form a helical membrane-spanning segment; sequence ITLISSMLLSVFVAMSLTPAL. Topologically, residues 493–534 are cytoplasmic; it reads CATILKAAPEGGHKPNALFARFNTLFEKSTQHYTDSTRSLLR. Residues 535-555 form a helical membrane-spanning segment; that stretch reads CTGRYMVVYLLICAGMAVLFL. The Periplasmic portion of the chain corresponds to 556 to 870; that stretch reads RTPTSFLPEE…SYQEALSSNQ (315 aa). A helical membrane pass occupies residues 871 to 891; it reads APALYAISLVVVFLALAALYE. A topological domain (cytoplasmic) is located at residue Ser-892. Residues 893 to 913 form a helical membrane-spanning segment; sequence WSIPFSVMLVVPLGVVGALLA. Residues 914–927 are Periplasmic-facing; it reads TDLRGLSNDVYFQV. Residues 928 to 948 form a helical membrane-spanning segment; sequence GLLTTIGLSAKNAILIVEFAV. Residues 949–972 lie on the Cytoplasmic side of the membrane; sequence EMMQKEGKTPVEAIIEAARMRLRP. The helical transmembrane segment at 973–993 threads the bilayer; the sequence is ILMTSLAFILGVLPLVISHGA. Topologically, residues 994-1006 are periplasmic; the sequence is GSGAQNAVGTGVM. Residues 1007–1027 traverse the membrane as a helical segment; that stretch reads GGMFAATVLAIYFVPVFFVVV. Topologically, residues 1028-1037 are cytoplasmic; that stretch reads EHLFARFKKA.

It belongs to the resistance-nodulation-cell division (RND) (TC 2.A.6) family. As to quaternary structure, homotrimer. Part of the tripartite efflux system MdtEF-TolC, which is composed of an inner membrane transporter, MdtF, a membrane fusion protein, MdtE, and an outer membrane component, TolC. The complex forms a large protein conduit and can translocate molecules across both the inner and outer membranes.

The protein resides in the cell inner membrane. Part of the tripartite efflux system MdtEF-TolC, which confers resistance to various compounds. The chain is Multidrug resistance protein MdtF (mdtF) from Escherichia coli O6:H1 (strain CFT073 / ATCC 700928 / UPEC).